We begin with the raw amino-acid sequence, 507 residues long: ATP synthase subunit alpha (507 aa).

170–177 (GDRQTGKT) contacts ATP.

It belongs to the ATPase alpha/beta chains family. As to quaternary structure, F-type ATPases have 2 components, CF(1) - the catalytic core - and CF(0) - the membrane proton channel. CF(1) has five subunits: alpha(3), beta(3), gamma(1), delta(1), epsilon(1). CF(0) has three main subunits: a(1), b(2) and c(9-12). The alpha and beta chains form an alternating ring which encloses part of the gamma chain. CF(1) is attached to CF(0) by a central stalk formed by the gamma and epsilon chains, while a peripheral stalk is formed by the delta and b chains.

It localises to the cell inner membrane. It carries out the reaction ATP + H2O + 4 H(+)(in) = ADP + phosphate + 5 H(+)(out). Functionally, produces ATP from ADP in the presence of a proton gradient across the membrane. The alpha chain is a regulatory subunit. The chain is ATP synthase subunit alpha from Thermosipho africanus (strain TCF52B).